A 1200-amino-acid chain; its full sequence is PAN2-PAN3 deadenylation complex catalytic subunit Pan2 (1200 aa).

WD repeat units follow at residues 153-193 (DENE…QKYA), 195-231 (ETPGVTIMRQTNRFFFCGHTSGKVSLRDLRSFKVEHE), 244-280 (VHGNLLAACGFSSRLTGLACDRFLKVYDLRMMRAITP), and 328-367 (PVGPLLMTFDVSASKQALAFGDSEGCVHLWTDSPEPSFNP). The segment at 368 to 484 (YSRETEFALP…PTGREEEPLH (117 aa)) is linker. The USP domain maps to 485-923 (TVSKKYRKVT…VPAILYYVKR (439 aa)). Phosphoserine is present on S784. In terms of domain architecture, Exonuclease spans 974 to 1146 (VGLDAEFVTL…EDARTALQLY (173 aa)). A divalent metal cation-binding residues include D977, E979, D1086, and D1138. S1188 is subject to Phosphoserine.

The protein belongs to the peptidase C19 family. PAN2 subfamily. As to quaternary structure, forms a heterotrimer with an asymmetric homodimer of the regulatory subunit PAN3 to form the poly(A)-nuclease (PAN) deadenylation complex. Interacts with PAN3 isoform 1/Pan3L and isoform 3/Pan3S. Interacts with ZFP36. It depends on a divalent metal cation as a cofactor.

Its subcellular location is the cytoplasm. The protein resides in the P-body. It is found in the nucleus. The enzyme catalyses Exonucleolytic cleavage of poly(A) to 5'-AMP.. Positively regulated by the regulatory subunit PAN3. In terms of biological role, catalytic subunit of the poly(A)-nuclease (PAN) deadenylation complex, one of two cytoplasmic mRNA deadenylases involved in general and miRNA-mediated mRNA turnover. PAN specifically shortens poly(A) tails of RNA and the activity is stimulated by poly(A)-binding protein (PABP). PAN deadenylation is followed by rapid degradation of the shortened mRNA tails by the CCR4-NOT complex. Deadenylated mRNAs are then degraded by two alternative mechanisms, namely exosome-mediated 3'-5' exonucleolytic degradation, or deadenylation-dependent mRNA decaping and subsequent 5'-3' exonucleolytic degradation by XRN1. Also acts as an important regulator of the HIF1A-mediated hypoxic response. Required for HIF1A mRNA stability independent of poly(A) tail length regulation. In Mus musculus (Mouse), this protein is PAN2-PAN3 deadenylation complex catalytic subunit Pan2.